The primary structure comprises 644 residues: uncharacterized protein (644 aa).

The disordered stretch occupies residues 65–117 (DSDVETTGGGGRGSTTSTEDRIDEHDDAIEDDGVSNEEDENQDAEQEQEVDLN). Positions 89–114 (HDDAIEDDGVSNEEDENQDAEQEQEV) are enriched in acidic residues.

This is an uncharacterized protein from Arabidopsis thaliana (Mouse-ear cress).